A 334-amino-acid chain; its full sequence is MASRRRKLRNFLNKECIWTVNPMSGDHIKVFNACTSISPVYDPELVTSYALSVPAYNVSVAILLHKVMGPCVAVGINGEMIMYVVSQCVSVRPVPGRDGMALIYFGQFLEEASGLRFPYIAPPPSREHVPDLTRQELVHTSQVVRRGDLTNCTMGLEFRNVNPFVWLGGGSVWLLFLGVDYMAFCPGVDGMPSLARVAALLTRCDHPDCVHCHGLRGHVNVFRGYCSAQSPGLSNICPCIKSCGTGNGVTRVTGNRNFLGLLFDPIVQSRVTALKITSHPTPTHVENVLTGVLDDGTLVPSSKAPWVLLRMSDYFSRLLIYECKKLKALGLRSY.

This sequence belongs to the herpesviridae cytoplasmic envelopment protein 2 family. In terms of assembly, interacts with cytoplasmic envelopment protein 3 and with the capsid.

It localises to the virion tegument. The protein resides in the host cytoplasm. Its subcellular location is the host nucleus. Plays a critical role in cytoplasmic virus egress. Participates in the final step of tegumentation and envelope acquisition within the host cytoplasm by directly interacting with the capsid. Upon virion binding to target cell, a signaling cascade is triggered to disrupt the interaction with the capsid, thereby preparing capsid uncoating. This is Cytoplasmic envelopment protein 2 (ORF33) from Homo sapiens (Human).